Reading from the N-terminus, the 366-residue chain is Anhydro-N-acetylmuramic acid kinase (366 aa).

Position 10–17 (Gly-10–Asp-17) interacts with ATP.

This sequence belongs to the anhydro-N-acetylmuramic acid kinase family.

The enzyme catalyses 1,6-anhydro-N-acetyl-beta-muramate + ATP + H2O = N-acetyl-D-muramate 6-phosphate + ADP + H(+). It participates in amino-sugar metabolism; 1,6-anhydro-N-acetylmuramate degradation. It functions in the pathway cell wall biogenesis; peptidoglycan recycling. Functionally, catalyzes the specific phosphorylation of 1,6-anhydro-N-acetylmuramic acid (anhMurNAc) with the simultaneous cleavage of the 1,6-anhydro ring, generating MurNAc-6-P. Is required for the utilization of anhMurNAc either imported from the medium or derived from its own cell wall murein, and thus plays a role in cell wall recycling. The protein is Anhydro-N-acetylmuramic acid kinase of Legionella pneumophila (strain Corby).